Consider the following 352-residue polypeptide: Plant intracellular Ras-group-related LRR protein 1 (352 aa).

A disordered region spans residues 1-25 (MREMGEKRRRGHLNPAGFAGGLHDH). LRR repeat units lie at residues 29 to 52 (KNEE…TMSL), 53 to 75 (GQVT…IIAR), 77 to 99 (LNVV…IGCL), 100 to 122 (SKLK…IEEC), 124 to 146 (ALEE…GFEL), 147 to 169 (HSLR…TSHM), 171 to 192 (ALRA…LENL), 195 to 217 (LEAL…VGLL), 218 to 241 (ASLR…GCLT), and 243 to 263 (LARF…VVEQ). The GVYW; degenerate motif lies at 264-271 (GLDAMRAY).

Belongs to the SHOC2 family. As to expression, widely expressed but at a lower level in seedlings and stems.

Functionally, leucine-rich repeat protein that likely mediates protein interactions, possibly in the context of signal transduction. This chain is Plant intracellular Ras-group-related LRR protein 1 (IRL1), found in Oryza sativa subsp. japonica (Rice).